Here is a 272-residue protein sequence, read N- to C-terminus: Dermonecrotic toxin LvSicTox-alphaIC1bi (272 aa).

Residue histidine 5 is part of the active site. Glutamate 25 and aspartate 27 together coordinate Mg(2+). The Nucleophile role is filled by histidine 41. 2 disulfide bridges follow: cysteine 45–cysteine 51 and cysteine 47–cysteine 189. Aspartate 84 contributes to the Mg(2+) binding site.

Belongs to the arthropod phospholipase D family. Class II subfamily. The cofactor is Mg(2+). As to expression, expressed by the venom gland.

It localises to the secreted. It carries out the reaction an N-(acyl)-sphingosylphosphocholine = an N-(acyl)-sphingosyl-1,3-cyclic phosphate + choline. The catalysed reaction is an N-(acyl)-sphingosylphosphoethanolamine = an N-(acyl)-sphingosyl-1,3-cyclic phosphate + ethanolamine. It catalyses the reaction a 1-acyl-sn-glycero-3-phosphocholine = a 1-acyl-sn-glycero-2,3-cyclic phosphate + choline. The enzyme catalyses a 1-acyl-sn-glycero-3-phosphoethanolamine = a 1-acyl-sn-glycero-2,3-cyclic phosphate + ethanolamine. Functionally, dermonecrotic toxins cleave the phosphodiester linkage between the phosphate and headgroup of certain phospholipids (sphingolipid and lysolipid substrates), forming an alcohol (often choline) and a cyclic phosphate. This toxin acts on sphingomyelin (SM). It may also act on ceramide phosphoethanolamine (CPE), lysophosphatidylcholine (LPC) and lysophosphatidylethanolamine (LPE), but not on lysophosphatidylserine (LPS), and lysophosphatidylglycerol (LPG). It acts by transphosphatidylation, releasing exclusively cyclic phosphate products as second products. Induces dermonecrosis, hemolysis, increased vascular permeability, edema, inflammatory response, and platelet aggregation. The chain is Dermonecrotic toxin LvSicTox-alphaIC1bi from Loxosceles variegata (Recluse spider).